A 926-amino-acid chain; its full sequence is Progesterone receptor (926 aa).

Residues 1–48 (MTELQAKDPQVLHTSGASPSPPHIGSPLLARLDSGPFQGSQHSDVSSV) are disordered. The AF3; mediates transcriptional activation (in isoform B) stretch occupies residues 1 to 165 (MTELQAKDPQ…PATKGLLSPL (165 aa)). Positions 1-559 (MTELQAKDPQ…YGFDSLPQKI (559 aa)) are modulating, Pro-Rich. A Glycyl lysine isopeptide (Lys-Gly) (interchain with G-Cter in SUMO) cross-link involves residue lysine 7. The residue at position 20 (serine 20) is a Phosphoserine. Positions 56–60 (LDGLL) match the LXXL motif 1 motif. Position 82 is a phosphoserine (serine 82). Residues 116-120 (LDSLL) carry the LXXL motif 1 motif. Residues serine 131 and serine 163 each carry the phosphoserine modification. The tract at residues 166–305 (MSRPEIKAGD…LATTVVDFIH (140 aa)) is mediates transcriptional transrepression (in isoform A). Residues 168–256 (RPEIKAGDSS…GTGSGGGVAA (89 aa)) form a disordered region. The Nuclear localization signal signature appears at 184 to 188 (KVLPK). Phosphoserine occurs at positions 191 and 214. Serine 294 carries the post-translational modification Phosphoserine; by MAPK1. A disordered region spans residues 327-364 (DSYDGGATAQGPFAPPRGSPSAPSPPVPCGDFPDCTYP). Positions 339-354 (FAPPRGSPSAPSPPVP) are enriched in pro residues. The residue at position 345 (serine 345) is a Phosphoserine; by MAPK. Lysine 388 is covalently cross-linked (Glycyl lysine isopeptide (Lys-Gly) (interchain with G-Cter in SUMO); alternate). Residue lysine 388 forms a Glycyl lysine isopeptide (Lys-Gly) (interchain with G-Cter in ubiquitin); alternate linkage. A disordered region spans residues 391 to 447 (EEGADAAVRSPRPYLSAGASSSTFPDFPLAPAPQRAPSSRPGEAAVAGGPSSAAVSP). A Phosphoserine; by CDK2 modification is found at serine 400. Residues 422 to 447 (APQRAPSSRPGEAAVAGGPSSAAVSP) show a composition bias toward low complexity. The segment at 453–539 (SALECILYKA…VYPPYLNYLR (87 aa)) is AF1; mediates transcriptional activation. A Glycyl lysine isopeptide (Lys-Gly) (interchain with G-Cter in SUMO) cross-link involves residue lysine 524. A DNA-binding region (nuclear receptor) is located at residues 557–632 (QKICLICGDE…AGMVLGGRKF (76 aa)). 2 consecutive NR C4-type zinc fingers follow at residues 560 to 580 (CLIC…CGSC) and 596 to 615 (CAGR…CPAC). Serine 669 is subject to Phosphoserine. An NR LBD domain is found at 672–906 (QEIQLVPPLI…EFPEMMSEVI (235 aa)). The segment at 673–926 (EIQLVPPLIN…MVKPLLFHKK (254 aa)) is AF2; mediates transcriptional activation. A progesterone-binding site is contributed by arginine 759.

This sequence belongs to the nuclear hormone receptor family. NR3 subfamily. As to quaternary structure, interacts with SMARD1 and UNC45A. Interacts with CUEDC2; the interaction promotes ubiquitination, decreases sumoylation, and represses transcriptional activity. Interacts with PIAS3; the interaction promotes sumoylation of PR in a hormone-dependent manner, inhibits DNA-binding, and alters nuclear export. Interacts with SP1; the interaction requires ligand-induced phosphorylation on Ser-294 by ERK1/2 MAPK. Interacts with PRMT2. Isoform A interacts with NCOR2. Isoform B (but not isoform A) interacts with NCOA2 and NCOA1. Isoform B (but not isoform A) interacts with KLF9. Phosphorylated on multiple serine sites. Several of these sites are hormone-dependent. Phosphorylation on Ser-294 is highly hormone-dependent and modulates ubiquitination and sumoylation on Lys-388. Phosphorylation on Ser-345 also requires induction by hormone. Basal phosphorylation on Ser-82, Ser-163, Ser-191 and Ser-400 is increased in response to progesterone and can be phosphorylated in vitro by the CDK2-A1 complex. Increased levels of phosphorylation on Ser-400 also in the presence of EGF, heregulin, IGF, PMA and FBS. Phosphorylation at this site by CDK2 is ligand-independent, and increases nuclear translocation and transcriptional activity. Phosphorylation at Ser-163 and Ser-294, but not at Ser-191, is impaired during the G(2)/M phase of the cell cycle. Phosphorylation on Ser-345 by ERK1/2 MAPK is required for interaction with SP1. In terms of processing, sumoylation is hormone-dependent and represses transcriptional activity. Sumoylation on all three sites is enhanced by PIAS3. Desumoylated by SENP1. Sumoylation on Lys-388, the main site of sumoylation, is repressed by ubiquitination on the same site, and modulated by phosphorylation at Ser-294. Post-translationally, ubiquitination is hormone-dependent and represses sumoylation on the same site. Promoted by MAPK-mediated phosphorylation on Ser-294. Ubiquitinated by UBR5, leading to its degradation: UBR5 specifically recognizes and binds ligand-bound PGR when it is not associated with coactivators (NCOAs). In presence of NCOAs, the UBR5-degron is not accessible, preventing its ubiquitination and degradation. Palmitoylated by ZDHHC7 and ZDHHC21. Palmitoylation is required for plasma membrane targeting and for rapid intracellular signaling via ERK and AKT kinases and cAMP generation. In terms of tissue distribution, expression of isoform A and isoform B in mammary epithelial cells is temporally and spatially separated during normal mammary gland development. Isoform A and isoform B are expressed in the pituitary. Isoform A and isoform B are differentially expressed in the ovary and oviduct, and the level of expression is dependent on both the cell type and estrous cycle stage.

Its subcellular location is the nucleus. It is found in the cytoplasm. Its function is as follows. The steroid hormones and their receptors are involved in the regulation of eukaryotic gene expression and affect cellular proliferation and differentiation in target tissues. Depending on the isoform, progesterone receptor functions as a transcriptional activator or repressor. Functionally, ligand-dependent transdominant repressor of steroid hormone receptor transcriptional activity including repression of its isoform B, MR and ER. Transrepressional activity may involve recruitment of corepressor NCOR2. In terms of biological role, transcriptional activator of several progesteron-dependent promoters in a variety of cell types. Involved in activation of SRC-dependent MAPK signaling on hormone stimulation. The protein is Progesterone receptor (Pgr) of Mus musculus (Mouse).